Here is a 67-residue protein sequence, read N- to C-terminus: Cold shock-like protein CspE (67 aa).

Residues 5-64 enclose the CSD domain; the sequence is GKVKWFNSEKGFGFIEVEGGNDVFVHFSAITGDGFKSLDEGQEVSFEVEDGNRGPQAKNV.

Homodimer.

The protein resides in the cytoplasm. Can bind to ATTGG and CCAAT motifs (Y-box motifs) of single-stranded oligonucleotides. The sequence is that of Cold shock-like protein CspE (cspE) from Bacillus anthracis.